The following is a 302-amino-acid chain: Oxygen-dependent coproporphyrinogen-III oxidase (302 aa).

A substrate-binding site is contributed by S94. 2 residues coordinate a divalent metal cation: H98 and H108. H108 (proton donor) is an active-site residue. 110-112 (NVR) provides a ligand contact to substrate. Residues H147 and H177 each coordinate a divalent metal cation. The tract at residues 242–277 (YVEFNLVWDRGTLFGLQSGGRTESILMSMPPLVRWE) is important for dimerization. 260–262 (GGR) lines the substrate pocket.

Belongs to the aerobic coproporphyrinogen-III oxidase family. As to quaternary structure, homodimer. A divalent metal cation serves as cofactor.

The protein localises to the cytoplasm. The enzyme catalyses coproporphyrinogen III + O2 + 2 H(+) = protoporphyrinogen IX + 2 CO2 + 2 H2O. It functions in the pathway porphyrin-containing compound metabolism; protoporphyrin-IX biosynthesis; protoporphyrinogen-IX from coproporphyrinogen-III (O2 route): step 1/1. Its function is as follows. Involved in the heme biosynthesis. Catalyzes the aerobic oxidative decarboxylation of propionate groups of rings A and B of coproporphyrinogen-III to yield the vinyl groups in protoporphyrinogen-IX. In Chromobacterium violaceum (strain ATCC 12472 / DSM 30191 / JCM 1249 / CCUG 213 / NBRC 12614 / NCIMB 9131 / NCTC 9757 / MK), this protein is Oxygen-dependent coproporphyrinogen-III oxidase.